A 154-amino-acid chain; its full sequence is Large ribosomal subunit protein eL24 (154 aa).

The segment at 92–154 (AKRNQKPEVR…AAAPRVGGKR (63 aa)) is disordered. The segment covering 96–122 (QKPEVRKAQREQAVKAAKEKKKADQVG) has biased composition (basic and acidic residues). Positions 129–154 (KARATAPKTKAPKTVKAAAPRVGGKR) are enriched in low complexity.

This sequence belongs to the eukaryotic ribosomal protein eL24 family.

In Branchiostoma belcheri (Amphioxus), this protein is Large ribosomal subunit protein eL24 (RPL24).